Here is a 300-residue protein sequence, read N- to C-terminus: Cytochrome f (300 aa).

Residues Met1 to Ala32 form the signal peptide. Residues Tyr33, Cys53, Cys56, and His57 each contribute to the heme site. The helical transmembrane segment at Leu267–Lys287 threads the bilayer.

Belongs to the cytochrome f family. In terms of assembly, the 4 large subunits of the cytochrome b6-f complex are cytochrome b6, subunit IV (17 kDa polypeptide, petD), cytochrome f and the Rieske protein, while the 4 small subunits are PetG, PetL, PetM and PetN. The complex functions as a dimer. The cofactor is heme.

It localises to the plastid. The protein resides in the chloroplast thylakoid membrane. Component of the cytochrome b6-f complex, which mediates electron transfer between photosystem II (PSII) and photosystem I (PSI), cyclic electron flow around PSI, and state transitions. The protein is Cytochrome f of Cyanidioschyzon merolae (strain NIES-3377 / 10D) (Unicellular red alga).